The sequence spans 170 residues: Myosin regulatory light chain 2, skeletal muscle isoform type 1 (170 aa).

A2 is modified (n,N,N-trimethylalanine). Phosphoserine is present on residues S16 and S17. A phosphothreonine mark is found at T26 and T36. The region spanning 26–61 (TQIQEFKEAFTVIDQNRDGIIDKEDLRDTFAAMGRL) is the EF-hand 1 domain. Ca(2+) is bound by residues D39, N41, D43, and D50. Position 76 is a phosphoserine (S76). EF-hand domains lie at 96 to 131 (DPEDVITGAFKVLDPEGKGTIKKQFLEELLITQCDR) and 132 to 167 (FSQEEIKNMWAAFSPDVGGNVDYKNICYVITHGDAK). At T102 the chain carries Phosphothreonine.

Myosin is a hexamer of 2 heavy chains and 4 light chains.

This Oryctolagus cuniculus (Rabbit) protein is Myosin regulatory light chain 2, skeletal muscle isoform type 1.